Reading from the N-terminus, the 379-residue chain is Proton extrusion protein PxcA (379 aa).

The next 4 helical transmembrane spans lie at 153-173 (TLVS…LQQI), 254-274 (AIKN…VCLF), 300-320 (FVII…GWTV), and 337-357 (FIDL…KYWI).

This sequence belongs to the CemA family.

The protein localises to the cell inner membrane. Required for H(+) efflux immediately after light irradiation to form a rapid H(+) concentration gradient across the thylakoid membranes. Together with PxcL, contributes to transient H(+) uptake following dark to light transition. This chain is Proton extrusion protein PxcA, found in Synechococcus sp. (strain RCC307).